A 216-amino-acid polypeptide reads, in one-letter code: Elongation factor Ts (216 aa).

The involved in Mg(2+) ion dislocation from EF-Tu stretch occupies residues 81–84 (TDFV).

This sequence belongs to the EF-Ts family.

The protein localises to the cytoplasm. In terms of biological role, associates with the EF-Tu.GDP complex and induces the exchange of GDP to GTP. It remains bound to the aminoacyl-tRNA.EF-Tu.GTP complex up to the GTP hydrolysis stage on the ribosome. This Citrifermentans bemidjiense (strain ATCC BAA-1014 / DSM 16622 / JCM 12645 / Bem) (Geobacter bemidjiensis) protein is Elongation factor Ts.